The chain runs to 67 residues: Protein LITTLE ZIPPER 3 (67 aa).

Residues 14–59 (YIMKENERLRKKAELLNQENQQLLFQLKQKLSKTKNSNNGSNNDNK) adopt a coiled-coil conformation. Residues 42-67 (QKLSKTKNSNNGSNNDNKSSSASGQS) are disordered.

In terms of assembly, interacts with REV. Interacts with ATBH-8, ATBH-9, ATB-14 and ATB-15. Expressed in the adaxial epidermis of the cotyledons and leaves, and in the vascular cylinder of wild-type torpedo stage embryos. Confined in the central zone and the organizing center in the shoot apical meristem.

It is found in the nucleus. In terms of biological role, competitive inhibitor of the HD-ZIPIII transcription factors in shoot apical meristem (SAM) development. Acts by forming non-functional heterodimers. Part of a negative feedback loop. Involved in SAM development and lateral organ patterning. Essential for proper functioning of stem cells in the SAM. This Arabidopsis thaliana (Mouse-ear cress) protein is Protein LITTLE ZIPPER 3.